The primary structure comprises 375 residues: 4,4'-diaponeurosporenoate glycosyltransferase (375 aa).

A run of 4 helical transmembrane segments spans residues 3-23, 164-184, 277-297, and 330-350; these read WLSRILTVIVTMSMACGALIF, FYEGFSAIFNLMTVVGMNVFS, IMTAIVLWLFGSIASILGLCL, and FSNLLMVCHPLLFMFFTKIFI.

It belongs to the glycosyltransferase 2 family. CrtQ subfamily.

It is found in the cell membrane. The protein operates within carotenoid biosynthesis; staphyloxanthin biosynthesis; staphyloxanthin from farnesyl diphosphate: step 4/5. Catalyzes the glycosylation of 4,4'-diaponeurosporenoate, i.e. the esterification of glucose at the C1'' position with the carboxyl group of 4,4'-diaponeurosporenic acid, to form glycosyl-4,4'-diaponeurosporenoate. This is a step in the biosynthesis of staphyloxanthin, an orange pigment present in most staphylococci strains. The chain is 4,4'-diaponeurosporenoate glycosyltransferase (crtQ) from Staphylococcus aureus (strain Mu50 / ATCC 700699).